Reading from the N-terminus, the 813-residue chain is Leucine--tRNA ligase (813 aa).

A 'HIGH' region motif is present at residues 42–52 (PYTSGNLHIGH). A 'KMSKS' region motif is present at residues 580–584 (KMSKS). Lys583 contacts ATP.

Belongs to the class-I aminoacyl-tRNA synthetase family.

The protein localises to the cytoplasm. It carries out the reaction tRNA(Leu) + L-leucine + ATP = L-leucyl-tRNA(Leu) + AMP + diphosphate. The chain is Leucine--tRNA ligase from Dehalococcoides mccartyi (strain ATCC BAA-2100 / JCM 16839 / KCTC 5957 / BAV1).